Here is a 434-residue protein sequence, read N- to C-terminus: Glutamyl-tRNA reductase (434 aa).

Substrate is bound by residues 52–55 (TCNR), serine 115, 120–122 (ETQ), and glutamine 126. The active-site Nucleophile is the cysteine 53. 195 to 200 (GAGEMI) is an NADP(+) binding site.

This sequence belongs to the glutamyl-tRNA reductase family. In terms of assembly, homodimer.

The enzyme catalyses (S)-4-amino-5-oxopentanoate + tRNA(Glu) + NADP(+) = L-glutamyl-tRNA(Glu) + NADPH + H(+). Its pathway is porphyrin-containing compound metabolism; protoporphyrin-IX biosynthesis; 5-aminolevulinate from L-glutamyl-tRNA(Glu): step 1/2. In terms of biological role, catalyzes the NADPH-dependent reduction of glutamyl-tRNA(Glu) to glutamate 1-semialdehyde (GSA). This chain is Glutamyl-tRNA reductase, found in Cupriavidus necator (strain ATCC 17699 / DSM 428 / KCTC 22496 / NCIMB 10442 / H16 / Stanier 337) (Ralstonia eutropha).